A 312-amino-acid polypeptide reads, in one-letter code: Malate dehydrogenase (312 aa).

NAD(+) contacts are provided by residues 7–13 and aspartate 34; that span reads GAAGGIG. Substrate is bound by residues arginine 81 and arginine 87. NAD(+) is bound by residues asparagine 94 and 117–119; that span reads ITN. 2 residues coordinate substrate: asparagine 119 and arginine 153. The Proton acceptor role is filled by histidine 177. Residue methionine 227 participates in NAD(+) binding.

Belongs to the LDH/MDH superfamily. MDH type 1 family. Homodimer.

It catalyses the reaction (S)-malate + NAD(+) = oxaloacetate + NADH + H(+). Catalyzes the reversible oxidation of malate to oxaloacetate. The polypeptide is Malate dehydrogenase (Escherichia coli O7:K1 (strain IAI39 / ExPEC)).